Reading from the N-terminus, the 267-residue chain is Zerumbone synthase (267 aa).

Residue 9–33 (LVTGGASGIGESIARLFIEHGAKIC) participates in NAD(+) binding. Ser-142 provides a ligand contact to substrate. Tyr-155 (proton acceptor) is an active-site residue.

Belongs to the short-chain dehydrogenases/reductases (SDR) family. In terms of tissue distribution, expressed in leaves, stems and rhizomes.

The enzyme catalyses 10-hydroxy-alpha-humulene + NAD(+) = zerumbone + NADH + H(+). Functionally, catalyzes 8-hydroxy-alpha-humulene into zerumbone in presence of NAD. Also converts borneol to camphor in vitro. Zerumbone is a highly promising multi-anticancer agent. This Zingiber zerumbet (Shampoo ginger) protein is Zerumbone synthase (ZSD1).